Consider the following 619-residue polypeptide: (-)-camphene synthase, chloroplastic (619 aa).

Residues 1-47 (MALVSVAPLVSMRRSLFSSPYELKSIDKTIPNLVMCRKRMSGTPSIR) constitute a chloroplast transit peptide. Mg(2+) contacts are provided by Asp-370, Asp-374, and Asp-522. The DDXXD motif signature appears at 370–374 (DDIYD).

Belongs to the terpene synthase family. Tpsd subfamily. Mg(2+) serves as cofactor. Mn(2+) is required as a cofactor.

It is found in the plastid. The protein localises to the chloroplast. It catalyses the reaction (2E)-geranyl diphosphate = (1S,4R)-camphene + diphosphate. The catalysed reaction is (2E)-geranyl diphosphate = (1R,5R)-alpha-pinene + diphosphate. The enzyme catalyses (2E)-geranyl diphosphate = tricyclene + diphosphate. It carries out the reaction (2E)-geranyl diphosphate = beta-myrcene + diphosphate. It catalyses the reaction (2E)-geranyl diphosphate = (1S,5S)-beta-pinene + diphosphate. The catalysed reaction is (2E)-geranyl diphosphate = (1S,5S)-alpha-pinene + diphosphate. It participates in terpene metabolism; oleoresin biosynthesis. It functions in the pathway secondary metabolite biosynthesis; terpenoid biosynthesis. In terms of biological role, monoterpene synthase (TPS) involved in the biosynthesis of monoterpene natural products included in conifer oleoresin secretions and volatile emissions; these compounds contribute to biotic and abiotic stress defense against herbivores and pathogens. Catalyzes the conversion of (2E)-geranyl diphosphate (GPP) to (-)-camphene, (+)-alpha-pinene and (-)-alpha-pinene, and, to a lower extent, to tricyclene, myrcene and (-)-beta-pinene. The sequence is that of (-)-camphene synthase, chloroplastic from Pinus contorta (Shore pine).